The chain runs to 89 residues: UPF0223 protein BAMEG_4214 (89 aa).

Belongs to the UPF0223 family.

This is UPF0223 protein BAMEG_4214 from Bacillus anthracis (strain CDC 684 / NRRL 3495).